Here is a 193-residue protein sequence, read N- to C-terminus: DNA damage-inducible transcript 4-like protein (193 aa).

It belongs to the DDIT4 family.

The protein localises to the cytoplasm. Inhibits cell growth by regulating the TOR signaling pathway upstream of the TSC1-TSC2 complex and downstream of AKT1. The chain is DNA damage-inducible transcript 4-like protein (DDIT4L) from Bos taurus (Bovine).